The following is a 334-amino-acid chain: Phosphate acyltransferase (334 aa).

This sequence belongs to the PlsX family. In terms of assembly, homodimer. Probably interacts with PlsY.

It is found in the cytoplasm. The catalysed reaction is a fatty acyl-[ACP] + phosphate = an acyl phosphate + holo-[ACP]. It functions in the pathway lipid metabolism; phospholipid metabolism. In terms of biological role, catalyzes the reversible formation of acyl-phosphate (acyl-PO(4)) from acyl-[acyl-carrier-protein] (acyl-ACP). This enzyme utilizes acyl-ACP as fatty acyl donor, but not acyl-CoA. The polypeptide is Phosphate acyltransferase (Desulfitobacterium hafniense (strain DSM 10664 / DCB-2)).